Reading from the N-terminus, the 127-residue chain is Large ribosomal subunit protein bL12 (127 aa).

Belongs to the bacterial ribosomal protein bL12 family. In terms of assembly, homodimer. Part of the ribosomal stalk of the 50S ribosomal subunit. Forms a multimeric L10(L12)X complex, where L10 forms an elongated spine to which 2 to 4 L12 dimers bind in a sequential fashion. Binds GTP-bound translation factors.

Functionally, forms part of the ribosomal stalk which helps the ribosome interact with GTP-bound translation factors. Is thus essential for accurate translation. The chain is Large ribosomal subunit protein bL12 from Acidiphilium cryptum (strain JF-5).